Here is a 272-residue protein sequence, read N- to C-terminus: Ethanolamine ammonia-lyase small subunit (272 aa).

Positions 161, 182, and 211 each coordinate adenosylcob(III)alamin.

The protein belongs to the EutC family. As to quaternary structure, the basic unit is a heterodimer which dimerizes to form tetramers. The heterotetramers trimerize; 6 large subunits form a core ring with 6 small subunits projecting outwards. Adenosylcob(III)alamin is required as a cofactor.

It localises to the bacterial microcompartment. The enzyme catalyses ethanolamine = acetaldehyde + NH4(+). The protein operates within amine and polyamine degradation; ethanolamine degradation. Its function is as follows. Catalyzes the deamination of various vicinal amino-alcohols to oxo compounds. Allows this organism to utilize ethanolamine as the sole source of nitrogen and carbon in the presence of external vitamin B12. The chain is Ethanolamine ammonia-lyase small subunit from Pseudomonas putida (strain GB-1).